We begin with the raw amino-acid sequence, 229 residues long: Large ribosomal subunit protein bL25 (229 aa).

Disordered regions lie at residues 1 to 21 (MDII…ASSR) and 182 to 229 (NAPE…KDKK). Residues 195 to 222 (PAAGAPAAGAAAAPAAGAAAPAKGAAPA) show a composition bias toward low complexity.

It belongs to the bacterial ribosomal protein bL25 family. CTC subfamily. As to quaternary structure, part of the 50S ribosomal subunit; part of the 5S rRNA/L5/L18/L25 subcomplex. Contacts the 5S rRNA. Binds to the 5S rRNA independently of L5 and L18.

Functionally, this is one of the proteins that binds to the 5S RNA in the ribosome where it forms part of the central protuberance. The chain is Large ribosomal subunit protein bL25 from Sorangium cellulosum (strain So ce56) (Polyangium cellulosum (strain So ce56)).